The chain runs to 468 residues: 3-isopropylmalate dehydratase large subunit (468 aa).

[4Fe-4S] cluster-binding residues include Cys349, Cys409, and Cys412.

It belongs to the aconitase/IPM isomerase family. LeuC type 1 subfamily. Heterodimer of LeuC and LeuD. The cofactor is [4Fe-4S] cluster.

The enzyme catalyses (2R,3S)-3-isopropylmalate = (2S)-2-isopropylmalate. The protein operates within amino-acid biosynthesis; L-leucine biosynthesis; L-leucine from 3-methyl-2-oxobutanoate: step 2/4. Its function is as follows. Catalyzes the isomerization between 2-isopropylmalate and 3-isopropylmalate, via the formation of 2-isopropylmaleate. This Nitrobacter winogradskyi (strain ATCC 25391 / DSM 10237 / CIP 104748 / NCIMB 11846 / Nb-255) protein is 3-isopropylmalate dehydratase large subunit.